The following is a 209-amino-acid chain: MERKVFSKDGKEIGTINLDDRVFNIEISHGSIYNAIKNELSNLRVGTSSTKTRSEVRGSSKKPWKQKGTGRARVGTKRNPVWIGGGIALGPKPRDYSYRLPKKVKKLAFKSVLSLRAADENSFKVIENFSVESGKTKDLALIIKNFASFNGKVVILLGNDDQMIKRAGKNIRDLKILSFDKLRVVDLFYAKNLIALESAVNKLNEFYIK.

The disordered stretch occupies residues 47–72 (TSSTKTRSEVRGSSKKPWKQKGTGRA). Positions 59 to 72 (SSKKPWKQKGTGRA) are enriched in basic residues.

Belongs to the universal ribosomal protein uL4 family. Part of the 50S ribosomal subunit.

Functionally, one of the primary rRNA binding proteins, this protein initially binds near the 5'-end of the 23S rRNA. It is important during the early stages of 50S assembly. It makes multiple contacts with different domains of the 23S rRNA in the assembled 50S subunit and ribosome. Forms part of the polypeptide exit tunnel. The protein is Large ribosomal subunit protein uL4 of Borreliella burgdorferi (strain ZS7) (Borrelia burgdorferi).